Consider the following 305-residue polypeptide: Ribonuclease BN (305 aa).

Residues H64, H66, D68, H69, H141, D212, and H270 each coordinate Zn(2+). D68 functions as the Proton acceptor in the catalytic mechanism.

Belongs to the RNase Z family. RNase BN subfamily. In terms of assembly, homodimer. Requires Zn(2+) as cofactor.

Zinc phosphodiesterase, which has both exoribonuclease and endoribonuclease activities. The sequence is that of Ribonuclease BN from Escherichia coli O6:K15:H31 (strain 536 / UPEC).